An 899-amino-acid chain; its full sequence is Semaphorin-1A (899 aa).

Residues 1–20 show a composition bias toward low complexity; it reads MLNSHNTNHNNNSASNSNYN. The tract at residues 1–24 is disordered; that stretch reads MLNSHNTNHNNNSASNSNYNKGHK. Residues 1-40 lie on the Cytoplasmic side of the membrane; it reads MLNSHNTNHNNNSASNSNYNKGHKMHLKSATAKATIMKHK. A helical membrane pass occupies residues 41–61; it reads LSKFYGYGWMQVFLLLTVLVI. The Extracellular portion of the chain corresponds to 62–657; the sequence is GNQSAWQENI…INAQYTVETL (596 aa). N-linked (GlcNAc...) asparagine glycosylation is found at Asn-63, Asn-90, and Asn-117. Residues 74–543 form the Sema domain; that stretch reads KLYVELGPED…TDSQVVAIQL (470 aa). Disulfide bonds link Cys-141–Cys-151 and Cys-169–Cys-178. N-linked (GlcNAc...) asparagine glycans are attached at residues Asn-187, Asn-207, and Asn-311. 2 disulfide bridges follow: Cys-288–Cys-402 and Cys-312–Cys-361. The N-linked (GlcNAc...) asparagine glycan is linked to Asn-404. The chain crosses the membrane as a helical span at residues 658-678; it reads VMAVLAGSIFSLLVGFFTGYF. Topologically, residues 679–899 are cytoplasmic; sequence CGRRCHKDED…PKNCSYIYRD (221 aa). 2 disordered regions span residues 735-766 and 798-899; these read VLLPQPPPPNKMHSPKNTLRKPPMHQMHQGPN and VMGD…IYRD. Over residues 809 to 827 the composition is skewed to polar residues; the sequence is FSTTRSVKKAVNNTNTRNR. Basic residues predominate over residues 828–837; sequence SLGRARRQPP. Residues 847-876 are compositionally biased toward low complexity; it reads SNSPQQQQQQSQQPHSSSGSSPVMSNSSSS.

Belongs to the semaphorin family. Expressed by subsets of neurons and muscles.

It localises to the cell membrane. In terms of biological role, involved in growth cone guidance through its role in axonal repulsion. Function in neurons is essential for adult survival, motor neuron survival, and is important for climbing behavior and activity. In Drosophila melanogaster (Fruit fly), this protein is Semaphorin-1A.